Here is a 299-residue protein sequence, read N- to C-terminus: Oxygen-dependent coproporphyrinogen-III oxidase (299 aa).

Ser-92 provides a ligand contact to substrate. A divalent metal cation is bound by residues His-96 and His-106. His-106 functions as the Proton donor in the catalytic mechanism. 108 to 110 (NVR) is a substrate binding site. His-145 and His-175 together coordinate a divalent metal cation. Residues 240-275 (YVEFNLVWDRGTLFGLQTGGRTESILMSMPPLVRWE) are important for dimerization. 258 to 260 (GGR) is a substrate binding site.

The protein belongs to the aerobic coproporphyrinogen-III oxidase family. Homodimer. It depends on a divalent metal cation as a cofactor.

It is found in the cytoplasm. It carries out the reaction coproporphyrinogen III + O2 + 2 H(+) = protoporphyrinogen IX + 2 CO2 + 2 H2O. It functions in the pathway porphyrin-containing compound metabolism; protoporphyrin-IX biosynthesis; protoporphyrinogen-IX from coproporphyrinogen-III (O2 route): step 1/1. Functionally, involved in the heme biosynthesis. Catalyzes the aerobic oxidative decarboxylation of propionate groups of rings A and B of coproporphyrinogen-III to yield the vinyl groups in protoporphyrinogen-IX. The protein is Oxygen-dependent coproporphyrinogen-III oxidase of Salmonella enteritidis PT4 (strain P125109).